The chain runs to 189 residues: Early E3 20.5 kDa glycoprotein (189 aa).

N-linked (GlcNAc...) asparagine; by host glycans are attached at residues Asn-73 and Asn-137.

It belongs to the adenoviridae E3_20 family.

In terms of biological role, E3 proteins seem to be dispensable for virus growth in tissue culture cells. They are potentially important for virus growth under special conditions; E3 region may help adenoviruses to evade the immune surveillance of the host. This is Early E3 20.5 kDa glycoprotein from Homo sapiens (Human).